The sequence spans 356 residues: Protein RecA (356 aa).

79–86 serves as a coordination point for ATP; it reads GPESSGKT.

The protein belongs to the RecA family.

Its subcellular location is the cytoplasm. Can catalyze the hydrolysis of ATP in the presence of single-stranded DNA, the ATP-dependent uptake of single-stranded DNA by duplex DNA, and the ATP-dependent hybridization of homologous single-stranded DNAs. It interacts with LexA causing its activation and leading to its autocatalytic cleavage. This is Protein RecA from Borrelia hermsii (strain HS1 / DAH).